Here is a 321-residue protein sequence, read N- to C-terminus: Glucokinase (321 aa).

Position 8–13 (Gly-8–Thr-13) interacts with ATP.

The protein belongs to the bacterial glucokinase family.

Its subcellular location is the cytoplasm. It catalyses the reaction D-glucose + ATP = D-glucose 6-phosphate + ADP + H(+). The polypeptide is Glucokinase (Erwinia tasmaniensis (strain DSM 17950 / CFBP 7177 / CIP 109463 / NCPPB 4357 / Et1/99)).